Reading from the N-terminus, the 311-residue chain is Dehydrogenase/reductase SDR family member 7C (311 aa).

The N-terminal stretch at 1 to 18 (MGVTAVLMLPLLLLGISG) is a signal peptide. Residues serine 47, leucine 49, tyrosine 191, lysine 195, and serine 226 each contribute to the NAD(+) site. The Proton acceptor role is filled by tyrosine 191.

The protein belongs to the short-chain dehydrogenases/reductases (SDR) family.

The protein resides in the sarcoplasmic reticulum membrane. The enzyme catalyses all-trans-retinol + NAD(+) = all-trans-retinal + NADH + H(+). Functionally, NADH-dependent oxidoreductase which catalyzes the oxidation of all-trans-retinol to all-trans-retinal. Plays a role in the regulation of cardiac and skeletal muscle metabolic functions. Maintains Ca(2+) intracellular homeostasis by repressing Ca(2+) release from the sarcoplasmic reticulum (SR) in myotubes, possibly through local alternations in NAD/NADH or retinol/retinal. Also plays a role in Ca(2+) homeostasis by controlling Ca(2+) overload in the cytosol and the SR in myotubes. Involved in glucose uptake into skeletal muscles and muscle performance by activating PI3K and mTORC2-mediated AKT1 phosphorylation signaling pathways, possibly through the action of its downstream catalytic product all-trans-retinoic acid. This Bos taurus (Bovine) protein is Dehydrogenase/reductase SDR family member 7C (DHRS7C).